The sequence spans 222 residues: Thiamine-phosphate synthase (222 aa).

Residues 42–46 (QYRDK) and Asn74 each bind 4-amino-2-methyl-5-(diphosphooxymethyl)pyrimidine. Asp75 and Asp94 together coordinate Mg(2+). A 4-amino-2-methyl-5-(diphosphooxymethyl)pyrimidine-binding site is contributed by Thr113. 140 to 142 (SAT) serves as a coordination point for 2-[(2R,5Z)-2-carboxy-4-methylthiazol-5(2H)-ylidene]ethyl phosphate. Lys143 lines the 4-amino-2-methyl-5-(diphosphooxymethyl)pyrimidine pocket. Residue Gly169 coordinates 2-[(2R,5Z)-2-carboxy-4-methylthiazol-5(2H)-ylidene]ethyl phosphate.

The protein belongs to the thiamine-phosphate synthase family. Mg(2+) is required as a cofactor.

The catalysed reaction is 2-[(2R,5Z)-2-carboxy-4-methylthiazol-5(2H)-ylidene]ethyl phosphate + 4-amino-2-methyl-5-(diphosphooxymethyl)pyrimidine + 2 H(+) = thiamine phosphate + CO2 + diphosphate. The enzyme catalyses 2-(2-carboxy-4-methylthiazol-5-yl)ethyl phosphate + 4-amino-2-methyl-5-(diphosphooxymethyl)pyrimidine + 2 H(+) = thiamine phosphate + CO2 + diphosphate. It catalyses the reaction 4-methyl-5-(2-phosphooxyethyl)-thiazole + 4-amino-2-methyl-5-(diphosphooxymethyl)pyrimidine + H(+) = thiamine phosphate + diphosphate. It functions in the pathway cofactor biosynthesis; thiamine diphosphate biosynthesis; thiamine phosphate from 4-amino-2-methyl-5-diphosphomethylpyrimidine and 4-methyl-5-(2-phosphoethyl)-thiazole: step 1/1. In terms of biological role, condenses 4-methyl-5-(beta-hydroxyethyl)thiazole monophosphate (THZ-P) and 2-methyl-4-amino-5-hydroxymethyl pyrimidine pyrophosphate (HMP-PP) to form thiamine monophosphate (TMP). The polypeptide is Thiamine-phosphate synthase (Marinobacter nauticus (strain ATCC 700491 / DSM 11845 / VT8) (Marinobacter aquaeolei)).